Here is a 93-residue protein sequence, read N- to C-terminus: uncharacterized protein (93 aa).

Positions 1-76 (MDSHTTEKRR…IQTIEPDESM (76 aa)) constitute a Sm domain.

In terms of assembly, part of the core SMN complex at least composed of smn1, yip11/gem2, gem6, gem7 and gem8. Interacts with gem7; the interaction is direct.

Functionally, the SMN complex catalyzes the assembly of small nuclear ribonucleoproteins (snRNPs), the building blocks of the spliceosome, and thereby plays an important role in the splicing of cellular pre-mRNAs. Most spliceosomal snRNPs contain a common set of Sm proteins smb1, smd1, smd2, smd3, sme1, smf1 and smg1 that assemble in a heptameric protein ring on the Sm site of the small nuclear RNA to form the core snRNP (Sm core). In the cytosol, the Sm proteins smd1, smd2, sme1, smf1 and smg1 (5Sm) are trapped in an inactive 6S pICln-Sm complex by the chaperone saf5. To complete assembly of core snRNPs, the SMN complex accepts 5Sm from saf5. Binding of snRNA inside 5Sm triggers eviction of the SMN complex, thereby allowing binding of smd3 and smb1 to complete assembly of the core snRNP. This is an uncharacterized protein from Schizosaccharomyces pombe (strain 972 / ATCC 24843) (Fission yeast).